The chain runs to 214 residues: Rac-like GTP-binding protein 1 (214 aa).

GTP-binding positions include 17–24, 20–25, Thr42, 64–68, Gly67, 122–125, 123–125, and 164–165; these read GDGAVGKT, AVGKTC, DTAGQ, TKLD, KLD, and SK. Residues 39-47 carry the Effector region motif; the sequence is YIPTVFDNF.

Belongs to the small GTPase superfamily. Rho family. In terms of assembly, may interact with MPK1/MAPK6. Binds to RBOHB, preferentially in the GTP-bound form. Interacts with CCR1 in a GTP-dependent manner. In terms of processing, may be palmitoylated.

Its subcellular location is the cytoplasm. It is found in the membrane. In terms of biological role, small GTPase playing a general role in disease resistance signaling pathway. Acts downstream of heterotrimeric G protein alpha subunit. Regulates cell death and reactive oxygen species production, probably through NADPH oxidase. Also involved in sphingolipid elicitor (SE)-dependent defense signaling. Activates phytoalexin production and alters defense-related genes. Down-regulates metallothionein 2b, a reactive oxygen scavenger. May control lignin synthesis through regulation of both NADPH oxidase and CCR1 activities during defense responses. Stimulates lignin synthesis in suspension cell culture. This Oryza sativa subsp. japonica (Rice) protein is Rac-like GTP-binding protein 1 (RAC1).